Reading from the N-terminus, the 313-residue chain is R2-like ligand binding oxidase (313 aa).

Mn(2+)-binding residues include Glu68, Glu101, and His104. The 3-(O4'-tyrosyl)-valine (Val-Tyr) cross-link spans 71 to 162 (VTQDIQPFMS…AAQVRASVTY (92 aa)). Position 101 (Glu101) interacts with Fe cation. Fe cation-binding residues include Glu167, Glu202, and His205.

Belongs to the ribonucleoside diphosphate reductase small chain family. R2-like ligand binding oxidase subfamily. In terms of assembly, homodimer. Fe cation serves as cofactor. Mn(2+) is required as a cofactor.

Functionally, probable oxidase that might be involved in lipid metabolism. The protein is R2-like ligand binding oxidase of Mycobacteroides abscessus (strain ATCC 19977 / DSM 44196 / CCUG 20993 / CIP 104536 / JCM 13569 / NCTC 13031 / TMC 1543 / L948) (Mycobacterium abscessus).